A 60-amino-acid polypeptide reads, in one-letter code: Large ribosomal subunit protein bL32 (60 aa).

Over residues 1 to 16 (MAVPKRKTTPSKRGMR) the composition is skewed to basic residues. The interval 1-60 (MAVPKRKTTPSKRGMRRSADALKQPAYVENPDSGELHRPHHVDLKSGMYRGKQILKPKGE) is disordered. Positions 34 to 44 (GELHRPHHVDL) are enriched in basic and acidic residues.

This sequence belongs to the bacterial ribosomal protein bL32 family.

This chain is Large ribosomal subunit protein bL32, found in Parvibaculum lavamentivorans (strain DS-1 / DSM 13023 / NCIMB 13966).